The following is a 745-amino-acid chain: Polyribonucleotide nucleotidyltransferase (745 aa).

2 residues coordinate Mg(2+): D487 and D493. The KH domain maps to 554–613 (PRIETMQIPTDKIRDVIGTGGKIIREIVEKTGAKINIEDTGVVKIASSDGKAIKAAYNWI). Residues 623–691 (GTIYDGTIVK…ERGKIRLSMK (69 aa)) form the S1 motif domain. Positions 695–745 (QETGEDITEKLKAERAERGEPEREERSDRGDRGDRGPRRDRGERRRESSGE) are disordered. The segment covering 701-745 (ITEKLKAERAERGEPEREERSDRGDRGDRGPRRDRGERRRESSGE) has biased composition (basic and acidic residues).

The protein belongs to the polyribonucleotide nucleotidyltransferase family. The cofactor is Mg(2+).

It is found in the cytoplasm. It catalyses the reaction RNA(n+1) + phosphate = RNA(n) + a ribonucleoside 5'-diphosphate. In terms of biological role, involved in mRNA degradation. Catalyzes the phosphorolysis of single-stranded polyribonucleotides processively in the 3'- to 5'-direction. The polypeptide is Polyribonucleotide nucleotidyltransferase (Methylorubrum populi (strain ATCC BAA-705 / NCIMB 13946 / BJ001) (Methylobacterium populi)).